Consider the following 204-residue polypeptide: Fruiting body protein SC7 (204 aa).

The N-terminal stretch at 1-16 is a signal peptide; it reads MKLTVILLTAVLAASA. Residues 62–185 enclose the SCP domain; that stretch reads LKAHNNERAQ…KTLWYYVCNY (124 aa). N-linked (GlcNAc...) asparagine glycosylation is found at Asn-80, Asn-118, and Asn-134.

This sequence belongs to the CRISP family.

It localises to the secreted. The sequence is that of Fruiting body protein SC7 (SC7) from Schizophyllum commune (Split gill fungus).